The sequence spans 357 residues: tRNA N6-adenosine threonylcarbamoyltransferase (357 aa).

The Fe cation site is built by His-115 and His-119. Residues 137–141 (LASGG), Asp-170, Gly-183, and Asn-281 each bind substrate. Asp-309 contacts Fe cation.

The protein belongs to the KAE1 / TsaD family. It depends on Fe(2+) as a cofactor.

It localises to the cytoplasm. The enzyme catalyses L-threonylcarbamoyladenylate + adenosine(37) in tRNA = N(6)-L-threonylcarbamoyladenosine(37) in tRNA + AMP + H(+). In terms of biological role, required for the formation of a threonylcarbamoyl group on adenosine at position 37 (t(6)A37) in tRNAs that read codons beginning with adenine. Is involved in the transfer of the threonylcarbamoyl moiety of threonylcarbamoyl-AMP (TC-AMP) to the N6 group of A37, together with TsaE and TsaB. TsaD likely plays a direct catalytic role in this reaction. The protein is tRNA N6-adenosine threonylcarbamoyltransferase of Nitrobacter winogradskyi (strain ATCC 25391 / DSM 10237 / CIP 104748 / NCIMB 11846 / Nb-255).